The primary structure comprises 255 residues: Isoprenyl transferase (255 aa).

The active site involves D35. D35 is a Mg(2+) binding site. Substrate contacts are provided by residues 36–39, W40, R48, H52, and 80–82; these read GNGR and STE. Residue N83 is the Proton acceptor of the active site. Residues W84, R86, R203, and 209–211 each bind substrate; that span reads RIS. Residue E222 participates in Mg(2+) binding.

This sequence belongs to the UPP synthase family. Homodimer. Mg(2+) is required as a cofactor.

In terms of biological role, catalyzes the condensation of isopentenyl diphosphate (IPP) with allylic pyrophosphates generating different type of terpenoids. This chain is Isoprenyl transferase, found in Clostridium tetani (strain Massachusetts / E88).